A 199-amino-acid polypeptide reads, in one-letter code: uncharacterized protein (199 aa).

This is an uncharacterized protein from Shigella flexneri.